The sequence spans 1933 residues: Protein TIC 214 (1933 aa).

The next 6 membrane-spanning stretches (helical) occupy residues 18–38, 60–80, 87–107, 128–148, 176–196, and 230–250; these read IVNS…FSIG, ATTG…YAPL, PHTI…FYTD, FSIQ…HFIL, VGWL…LVWI, and IFYI…PAPL. Disordered stretches follow at residues 266–291, 473–514, 808–832, and 1066–1121; these read AKGK…VGVG, KTKS…SRDN, THRE…AEDP, and ESFT…SSNA. A compositionally biased stretch (acidic residues) spans 278 to 289; it reads EEGDVEKEDEVG. A compositionally biased stretch (polar residues) spans 476 to 487; that stretch reads SLSPEKTSGDNL. 2 stretches are compositionally biased toward basic and acidic residues: residues 488–514 and 819–832; these read ETSR…SRDN and DEKN…AEDP. A compositionally biased stretch (polar residues) spans 1066–1078; the sequence is ESFTQISSPSSTN. The span at 1105 to 1115 shows a compositional bias: basic residues; sequence KEKKKKKRSLK. Residues 1135 to 1155 form a helical membrane-spanning segment; that stretch reads LPVYLKLFIQRIYTGIFFSII. Residues 1562 to 1642 are disordered; that stretch reads NADNEKNEKK…SAESTTKKVT (81 aa). Residues 1564-1642 are compositionally biased toward basic and acidic residues; sequence DNEKNEKKEA…SAESTTKKVT (79 aa).

Belongs to the TIC214 family. In terms of assembly, part of the Tic complex.

It is found in the plastid. The protein localises to the chloroplast inner membrane. In terms of biological role, involved in protein precursor import into chloroplasts. May be part of an intermediate translocation complex acting as a protein-conducting channel at the inner envelope. The sequence is that of Protein TIC 214 from Jasminum nudiflorum (Winter jasmine).